Here is a 33-residue protein sequence, read N- to C-terminus: Potassium channel toxin alpha-KTx 10.5 (33 aa).

3 cysteine pairs are disulfide-bonded: Cys-4–Cys-23, Cys-9–Cys-28, and Cys-13–Cys-30.

In terms of tissue distribution, expressed by the venom gland.

It localises to the secreted. Functionally, inhibits less than 5% of human voltage-gated potassium (Kv) channel Kv1.3/KCNA3 currents at 100nM concentration and does not block human Kv1.1/KCNA1 and Kv1.2/KCNA2 currents. This is Potassium channel toxin alpha-KTx 10.5 from Centruroides bonito (Scorpion).